Reading from the N-terminus, the 203-residue chain is Large ribosomal subunit protein uL18 (203 aa).

It belongs to the universal ribosomal protein uL18 family. As to quaternary structure, part of the 50S ribosomal subunit. Contacts the 5S and 23S rRNAs.

Its function is as follows. This is one of the proteins that bind and probably mediate the attachment of the 5S RNA into the large ribosomal subunit, where it forms part of the central protuberance. The polypeptide is Large ribosomal subunit protein uL18 (Pyrococcus abyssi (strain GE5 / Orsay)).